The chain runs to 63 residues: MANDCKCPNGCSCPNCANGGCQCGDKCECKKQSCHGCGEQCKCGSHGSSCHGSCGCGDKCECK.

2 repeats span residues 23–30 (CGDKCECK) and 56–63 (CGDKCECK).

This sequence belongs to the metallothionein superfamily. Type 9 family.

Functionally, the metallothioneins are involved in the cellular sequestration of toxic metal ions. The chain is Metallothionein-1 (MT-I) from Candida glabrata (strain ATCC 2001 / BCRC 20586 / JCM 3761 / NBRC 0622 / NRRL Y-65 / CBS 138) (Yeast).